Here is a 91-residue protein sequence, read N- to C-terminus: Small ribosomal subunit protein uS19 (91 aa).

This sequence belongs to the universal ribosomal protein uS19 family.

Its function is as follows. Protein S19 forms a complex with S13 that binds strongly to the 16S ribosomal RNA. The sequence is that of Small ribosomal subunit protein uS19 from Prochlorococcus marinus subsp. pastoris (strain CCMP1986 / NIES-2087 / MED4).